Consider the following 1953-residue polypeptide: Protein BNI1 (1953 aa).

Disordered stretches follow at residues 1–152, 230–258, 263–282, and 287–306; these read MLKN…ASSL, MRAN…ANSS, KSVL…SNSL, and TLSS…SGSL. Residues 31 to 40 are compositionally biased toward low complexity; that stretch reads ANSNATNSNT. Polar residues-rich tracts occupy residues 41 to 100 and 110 to 143; these read GSPT…SQYM and VSSQ…RQHT. The GBD/FH3 domain maps to 174–696; that stretch reads EMPSDPYEVE…NVSVASTSDE (523 aa). A compositionally biased stretch (low complexity) spans 232 to 246; the sequence is ANTTSSSTASRTSMA. Positions 263 to 278 are enriched in polar residues; that stretch reads KSVLMTSASSPTSTVY. Residues S311 and S325 each carry the phosphoserine modification. The segment at 312 to 337 is disordered; the sequence is LNNIYRGGAENNTSASTLPGDRTNRP. 3 coiled-coil regions span residues 712–807, 864–894, and 928–981; these read QTDE…TILN, NKRL…EFEK, and NKLN…YKGF. Disordered stretches follow at residues 990 to 1014, 1040 to 1094, and 1149 to 1330; these read IMDS…SLDP, HEIQ…LDAL, and TQKV…MPAS. One can recognise an FH1 domain in the interval 1053 to 1337; it reads SSSSSDDESE…PASQIKSAVT (285 aa). S1085 and S1170 each carry phosphoserine. Positions 1184–1211 are enriched in basic and acidic residues; the sequence is DKAEKDMRQHVENGKQGRVVNHEEDKTA. Over residues 1217-1237 the composition is skewed to polar residues; sequence SKLNNTDGAEDLSTQSSVLSS. The span at 1238–1250 shows a compositional bias: pro residues; it reads QPPPPPPPPPPVP. Basic and acidic residues predominate over residues 1257-1270; the sequence is SLEKEKKSEDDTVK. Over residues 1278–1292 the composition is skewed to pro residues; sequence PAPPPPPPPPPPPPM. Phosphoserine occurs at positions 1338 and 1344. Residues 1348–1766 form the FH2 domain; it reads FEKYPRPHKK…YIKHKKIVEE (419 aa). A coiled-coil region spans residues 1732-1811; that stretch reads KFADFINEYK…DKLLEQLKNA (80 aa). Residues 1768 to 1779 show a composition bias toward basic and acidic residues; it reads QKRAQEKEKQKE. 3 disordered regions span residues 1768–1797, 1809–1844, and 1872–1899; these read QKRA…AEDR, KNAG…LLND, and PTPL…LEDQ. Residues 1792 to 1826 enclose the DAD domain; it reads DEAEDRRAVMDKLLEQLKNAGPAKSDPSSARKRAL. The segment covering 1821 to 1830 has biased composition (basic residues); that stretch reads ARKRALVRKK. Residues 1880-1896 are compositionally biased toward polar residues; the sequence is VMNTSEDLPSPSKTSAL. T1918 is subject to Phosphothreonine.

This sequence belongs to the formin homology family. BNI1 subfamily. Homodimer, and possibly also homotetramer. Interacts with PFY1 via the FH1 domain and with actin via the FH2 domain.

The protein localises to the cell membrane. The protein resides in the cell projection. It localises to the ruffle membrane. It is found in the cytoplasm. Its subcellular location is the cytoskeleton. Functionally, required for the assembly of F-actin structures, such as actin cables and stress fibers. Nucleates actin filaments. Binds to the barbed end of the actin filament and acts as a leaky capper, slowing both polymerization and depolymerization. Protects the growing actin fiber from tight capping proteins and so increases the time of elongation and the total amount of F-actin. May organize microtubules by mediating spindle positioning and movement in the budding process. Potential target of the RHO family members. This Saccharomyces cerevisiae (strain ATCC 204508 / S288c) (Baker's yeast) protein is Protein BNI1 (BNI1).